We begin with the raw amino-acid sequence, 270 residues long: Fluoride-specific ion channel FluC 1 (270 aa).

4 consecutive transmembrane segments (helical) span residues 4–24 (IIIL…FIML), 35–55 (LDIL…TALY), 67–87 (IIGT…YGSV), and 96–116 (AFLI…VAVL). Na(+) contacts are provided by Gly74 and Ser77.

It belongs to the fluoride channel Fluc/FEX (TC 1.A.43) family.

The protein resides in the cell inner membrane. It catalyses the reaction fluoride(in) = fluoride(out). Na(+) is not transported, but it plays an essential structural role and its presence is essential for fluoride channel function. Its function is as follows. Fluoride-specific ion channel. Important for reducing fluoride concentration in the cell, thus reducing its toxicity. The protein is Fluoride-specific ion channel FluC 1 of Brucella abortus biovar 1 (strain 9-941).